Here is a 625-residue protein sequence, read N- to C-terminus: Pyriculol/pyriculariol biosynthesis cluster transcription factor 1 (625 aa).

Disordered regions lie at residues 1–83 and 466–496; these read MATE…ATQD and PMSA…LPAS. Low complexity predominate over residues 46 to 59; it reads TPSPSTPANPNSAS. The homeobox DNA-binding region spans 73-132; that stretch reads KNQKRQRATQDQLTTLEQEFAKNPTPTATVRDRIAEEINMTERSVQIWFQNRRAKIKLMA. The span at 467 to 496 shows a compositional bias: polar residues; that stretch reads MSATTAPSPSEYNSPSFFSQAPENTPLPAS.

Its subcellular location is the nucleus. Functionally, transcriptional regulator; part of the gene cluster that mediates the biosynthesis of pyriculol and pyriculariol, two heptaketides that induce lesion formation upon application on rice leaves but are dispensable for pathogenicity. With TRF1, negatively regulates the expression of the gene cluster and the subsequent pyriculol and pyriculariol production. The protein is Pyriculol/pyriculariol biosynthesis cluster transcription factor 1 of Pyricularia oryzae (strain 70-15 / ATCC MYA-4617 / FGSC 8958) (Rice blast fungus).